A 309-amino-acid chain; its full sequence is Taste receptor type 2 member 113 (309 aa).

The Extracellular portion of the chain corresponds to 1–8 (MVAVLQST). A helical transmembrane segment spans residues 9-29 (FAIIFSMEFIVGTLGNGFIIL). Residues 30 to 55 (MTCIDWVRRRKISLVDQILTALAITR) lie on the Cytoplasmic side of the membrane. The helical transmembrane segment at 56-76 (ITLILLVFIDWWVSVLFPALH) threads the bilayer. The Extracellular portion of the chain corresponds to 77–101 (ETGKILRMYFISWTVINHCNLWLTA). Residues 102-122 (SLSIIYFLKIASFSSIIFLYL) traverse the membrane as a helical segment. At 123–127 (KFRVK) the chain is on the cytoplasmic side. A helical membrane pass occupies residues 128-148 (NVVFVTLLVSLFFLFINTAIV). Residues 149 to 185 (NVYFDVCFDGVQRNVSQVSRLYNHEQICKFLSFTNPM) are Extracellular-facing. The N-linked (GlcNAc...) asparagine glycan is linked to Asn162. The helical transmembrane segment at 186–206 (FAFIPFVTSMATFFLLIFSLW) threads the bilayer. Residues 207-229 (RHLKNMKHNAEGCRDVSTIVHIR) lie on the Cytoplasmic side of the membrane. A helical membrane pass occupies residues 230-250 (ALQTIIVSVVLYSTFFLSFFV). The Extracellular segment spans residues 251 to 262 (KVWSSGSPERYL). Residues 263 to 283 (IFLFVWALGNAVLPAHTFVLI) form a helical membrane-spanning segment. Residues 284 to 309 (WGNCRLRWASLSLMLWLRYRFKNIDV) are Cytoplasmic-facing.

The protein belongs to the G-protein coupled receptor T2R family.

The protein localises to the membrane. In terms of biological role, putative taste receptor which may play a role in the perception of bitterness. This Rattus norvegicus (Rat) protein is Taste receptor type 2 member 113.